We begin with the raw amino-acid sequence, 562 residues long: MKTHILLARVLACAALVLVTPGYSSEKIPVTGSGFVAKDDSLRTFFDAMALQLKEPVIVSKMAARKKITGNFEFHDPNALLEKLSLQLGLIWYFDGQAIYIYDASEMRNAVVSLRNVSLNEFNNFLKRSGLYNKNYPLRGDNRKGTFYVSGPPVYVDMVVNAATMMDKQNDGIELGRQKIGVMRLNNTFVGDRTYNLRDQKMVIPGIATAIERLLQGEEQPLGNIVSSEPPAMPAFSANGEKGKAANYAGGMSLQEALKQNAAAGNIKIVAYPDTNSLLVKGTAEQVHFIEMLVKALDVAKRHVELSLWIVDLNKSDLERLGTSWSGSITIGDKLGVSLNQSSISTLDGSRFIAAVNALEEKKQATVVSRPVLLTQENVPAIFDNNRTFYTKLIGERNVALEHVTYGTMIRVLPRFSADGQIEMSLDIEDGNDKTPQSDTTTSVDALPEVGRTLISTIARVPHGKSLLVGGYTRDANTDTVQSIPFLGKLPLIGSLFRYSSKNKSNVVRVFMIEPKEIVDPLTPDASESVNNILKQSGAWSGDDKLQKWVRVYLDRGQEAIK.

A signal peptide spans 1–24 (MKTHILLARVLACAALVLVTPGYS).

It belongs to the bacterial secretin family. T3SS SctC subfamily. In terms of assembly, the core secretion machinery of the T3SS is composed of approximately 20 different proteins, including cytoplasmic components, a base, an export apparatus and a needle. This subunit is part of the base, which anchors the injectisome in the bacterial cell envelope. Forms a stable homooligomeric complex. The complex is composed of 15 subunits.

It localises to the cell outer membrane. Its function is as follows. Component of the type III secretion system (T3SS), also called injectisome, which is used to inject bacterial effector proteins into eukaryotic host cells. Forms a ring-shaped multimeric structure with an apparent central pore in the outer membrane. The polypeptide is SPI-1 type 3 secretion system secretin (Salmonella typhimurium (strain LT2 / SGSC1412 / ATCC 700720)).